Consider the following 393-residue polypeptide: Glycerol-3-phosphate dehydrogenase [NAD(+)] 1 (393 aa).

Residues 45–50, Phe133, Lys157, and Ala190 each bind NAD(+); that span reads GSGNWG. Substrate is bound at residue Lys157. Catalysis depends on Lys250, which acts as the Proton acceptor. NAD(+)-binding residues include Arg316 and Gln345. 316–317 is a binding site for substrate; that stretch reads RN.

It belongs to the NAD-dependent glycerol-3-phosphate dehydrogenase family.

The catalysed reaction is sn-glycerol 3-phosphate + NAD(+) = dihydroxyacetone phosphate + NADH + H(+). The polypeptide is Glycerol-3-phosphate dehydrogenase [NAD(+)] 1 (gpd1) (Cyberlindnera jadinii (Torula yeast)).